A 118-amino-acid chain; its full sequence is ATP synthase subunit gamma, chloroplastic (118 aa).

The cysteines at positions 30 and 36 are disulfide-linked.

It belongs to the ATPase gamma chain family. In terms of assembly, F-type ATPases have 2 components, CF(1) - the catalytic core - and CF(0) - the membrane proton channel. CF(1) has five subunits: alpha(3), beta(3), gamma(1), delta(1), epsilon(1). CF(0) has four main subunits: a, b, b' and c.

Its subcellular location is the plastid. The protein resides in the chloroplast thylakoid membrane. Its function is as follows. Produces ATP from ADP in the presence of a proton gradient across the membrane. The gamma chain is believed to be important in regulating ATPase activity and the flow of protons through the CF(0) complex. Inceptin is a proteolytic fragment produced by insect larvae that previously ingested the protein. This peptide mediate plant perception of herbivory through the induction of volatile, phenylpropanoid and protease inhibitor defenses such as ethylene, jasmonic acid and salicylic acid for example. This is ATP synthase subunit gamma, chloroplastic from Vigna unguiculata (Cowpea).